A 403-amino-acid chain; its full sequence is Probable tRNA sulfurtransferase (403 aa).

Residues 61 to 166 enclose the THUMP domain; sequence EAIAESLKDV…SGYSYIMCDE (106 aa). Residues 184–185, 209–210, R266, G288, and Q297 contribute to the ATP site; these read LL and HF.

The protein belongs to the ThiI family.

It is found in the cytoplasm. It catalyses the reaction [ThiI sulfur-carrier protein]-S-sulfanyl-L-cysteine + a uridine in tRNA + 2 reduced [2Fe-2S]-[ferredoxin] + ATP + H(+) = [ThiI sulfur-carrier protein]-L-cysteine + a 4-thiouridine in tRNA + 2 oxidized [2Fe-2S]-[ferredoxin] + AMP + diphosphate. The catalysed reaction is [ThiS sulfur-carrier protein]-C-terminal Gly-Gly-AMP + S-sulfanyl-L-cysteinyl-[cysteine desulfurase] + AH2 = [ThiS sulfur-carrier protein]-C-terminal-Gly-aminoethanethioate + L-cysteinyl-[cysteine desulfurase] + A + AMP + 2 H(+). It participates in cofactor biosynthesis; thiamine diphosphate biosynthesis. In terms of biological role, catalyzes the ATP-dependent transfer of a sulfur to tRNA to produce 4-thiouridine in position 8 of tRNAs, which functions as a near-UV photosensor. Also catalyzes the transfer of sulfur to the sulfur carrier protein ThiS, forming ThiS-thiocarboxylate. This is a step in the synthesis of thiazole, in the thiamine biosynthesis pathway. The sulfur is donated as persulfide by IscS. The chain is Probable tRNA sulfurtransferase from Bacillus cytotoxicus (strain DSM 22905 / CIP 110041 / 391-98 / NVH 391-98).